Consider the following 449-residue polypeptide: Rubisco accumulation factor 1.2, chloroplastic (449 aa).

Residues 1–61 (MFSLKSLISS…NMIPKNPPAR (61 aa)) constitute a chloroplast transit peptide. Residues 75-264 (IPTQFRSLDS…KAKNRLNTEL (190 aa)) form an N-terminal alpha-helix region. A coiled-coil region spans residues 262–288 (TELYGDKEAEKEKEKKKKEEEVKAIRI). Residues 288–434 (IPVVRLKFGE…GMVVLVVRPP (147 aa)) are C-terminal beta sheet.

The protein belongs to the RAF family. As to quaternary structure, homodimer.

The protein localises to the plastid. The protein resides in the chloroplast. Its function is as follows. Required for assembly or stability of RuBisCO. Acts at a postchaperonin step to fold and/or assemble the large subunit (rbcL) into RuBisCO. RAF1 brackets an rbcL dimer (rbcL(2)), leading to rbcL(8)-RAF1(4) complex formation. In the next step, RBCS displaces RAF1, thus resulting in holoenzyme formation. The sequence is that of Rubisco accumulation factor 1.2, chloroplastic from Arabidopsis thaliana (Mouse-ear cress).